We begin with the raw amino-acid sequence, 308 residues long: 4-hydroxyproline 2-epimerase (308 aa).

Cysteine 88 (proton acceptor) is an active-site residue. Residues 89 to 90 (GH), histidine 208, and aspartate 232 contribute to the substrate site. The Proton donor role is filled by cysteine 236. 237 to 238 (GT) contacts substrate.

The protein belongs to the proline racemase family.

It carries out the reaction trans-4-hydroxy-L-proline = cis-4-hydroxy-D-proline. Functionally, catalyzes the reversible epimerization of cis-4-hydroxy-D-proline (c4DHyp) to trans-4-hydroxy-L-proline (t4LHyp). May be involved in a degradation pathway that allows P.putida strain KT2440 to grow on either epimer of 4-hydroxyproline, c4DHyp and t4LHyp, as the sole carbon and nitrogen source. Does not exhibit measureable racemase activity in vitro with any of the 19 natural chiral amino acid enantiomers. The chain is 4-hydroxyproline 2-epimerase from Pseudomonas putida (strain ATCC 47054 / DSM 6125 / CFBP 8728 / NCIMB 11950 / KT2440).